We begin with the raw amino-acid sequence, 38 residues long: Photosystem II reaction center protein X (38 aa).

Residues 9-29 (IASLTAGALVLSAIGIALIII) traverse the membrane as a helical segment.

It belongs to the PsbX family. Type 1 subfamily. As to quaternary structure, PSII is composed of 1 copy each of membrane proteins PsbA, PsbB, PsbC, PsbD, PsbE, PsbF, PsbH, PsbI, PsbJ, PsbK, PsbL, PsbM, PsbT, PsbX, PsbY, PsbZ, Psb30/Ycf12, at least 3 peripheral proteins of the oxygen-evolving complex and a large number of cofactors. It forms dimeric complexes.

Its subcellular location is the plastid. It localises to the chloroplast thylakoid membrane. Involved in the binding and/or turnover of quinones at the Q(B) site of photosystem II (PSII). PSII is a light-driven water plastoquinone oxidoreductase, using light energy to abstract electrons from H(2)O, generating a proton gradient subsequently used for ATP formation. The protein is Photosystem II reaction center protein X of Thalassiosira pseudonana (Marine diatom).